The chain runs to 368 residues: tRNA-specific 2-thiouridylase MnmA (368 aa).

ATP contacts are provided by residues 24 to 31 (AMSGGVDS) and leucine 50. The active-site Nucleophile is the cysteine 117. An intrachain disulfide couples cysteine 117 to cysteine 213. ATP is bound at residue glycine 141. Positions 163–165 (KDQ) are interaction with tRNA. Cysteine 213 (cysteine persulfide intermediate) is an active-site residue.

This sequence belongs to the MnmA/TRMU family.

The protein resides in the cytoplasm. The catalysed reaction is S-sulfanyl-L-cysteinyl-[protein] + uridine(34) in tRNA + AH2 + ATP = 2-thiouridine(34) in tRNA + L-cysteinyl-[protein] + A + AMP + diphosphate + H(+). Catalyzes the 2-thiolation of uridine at the wobble position (U34) of tRNA, leading to the formation of s(2)U34. The protein is tRNA-specific 2-thiouridylase MnmA of Wolbachia pipientis subsp. Culex pipiens (strain wPip).